We begin with the raw amino-acid sequence, 211 residues long: Probable nicotinate-nucleotide adenylyltransferase (211 aa).

This sequence belongs to the NadD family.

It carries out the reaction nicotinate beta-D-ribonucleotide + ATP + H(+) = deamido-NAD(+) + diphosphate. Its pathway is cofactor biosynthesis; NAD(+) biosynthesis; deamido-NAD(+) from nicotinate D-ribonucleotide: step 1/1. Its function is as follows. Catalyzes the reversible adenylation of nicotinate mononucleotide (NaMN) to nicotinic acid adenine dinucleotide (NaAD). This chain is Probable nicotinate-nucleotide adenylyltransferase, found in Gemmatimonas aurantiaca (strain DSM 14586 / JCM 11422 / NBRC 100505 / T-27).